We begin with the raw amino-acid sequence, 524 residues long: Magnesium/proton exchanger 2 (524 aa).

Helical transmembrane passes span 28–48 (GVRA…LSAI), 88–108 (IADV…LATI), 125–145 (GTLV…CVVM), 157–177 (LGVW…LYII), 185–205 (VITL…LLHA), 325–345 (VIGI…AFIP), 349–369 (IAHG…IAYG), 377–397 (ISCV…AAGT), 430–450 (IYVG…LFVY), 462–482 (LSFS…VLVL), and 496–516 (MWAW…VVLS).

It belongs to the Ca(2+):cation antiporter (CaCA) (TC 2.A.19) family. MHX subfamily.

Its subcellular location is the vacuole membrane. In terms of biological role, vacuolar transporter that exchanges protons with Mg(2+), Zn(2+) and Fe(2+) ions. May control the partitioning of Mg(2+) and Zn(2+) between plant organs. The protein is Magnesium/proton exchanger 2 (MHX2) of Oryza sativa subsp. japonica (Rice).